The following is an 853-amino-acid chain: Transcription factor macR (853 aa).

A DNA-binding region (zn(2)-C6 fungal-type) is located at residues 18–45 (CIVCRRRKVRCGREQPECANCVRMKENC). Disordered regions lie at residues 54–122 (ESTG…PYPT), 138–166 (ANAP…PTPS), 734–775 (ASDL…AGNK), and 833–853 (LGSQ…DFPG). 3 stretches are compositionally biased toward polar residues: residues 104 to 116 (PQVS…SPQR), 141 to 163 (PQIN…SLFP), and 738 to 752 (RATS…SSTT).

Its subcellular location is the nucleus. Its function is as follows. Transcription factor that regulates the expression of the gene cluster that mediates the biosynthesis of macrophorins, isoprenoid epoxycyclohexenones containing cyclized drimane moieties. This is Transcription factor macR from Penicillium terrestre.